We begin with the raw amino-acid sequence, 302 residues long: D-alanine--D-alanine ligase B (302 aa).

Positions 99–294 constitute an ATP-grasp domain; sequence KKVLKAENIR…YSKFIDLIIE (196 aa). Position 126–181 (126–181) interacts with ATP; the sequence is IEEIGYPVFVKPNNGGSSVATFKVYKKEDIKNSVMEGLKYDEEVIIESFIKGREIT. Positions 248, 261, and 263 each coordinate Mg(2+).

This sequence belongs to the D-alanine--D-alanine ligase family. It depends on Mg(2+) as a cofactor. Mn(2+) serves as cofactor.

Its subcellular location is the cytoplasm. The catalysed reaction is 2 D-alanine + ATP = D-alanyl-D-alanine + ADP + phosphate + H(+). It functions in the pathway cell wall biogenesis; peptidoglycan biosynthesis. Its function is as follows. Cell wall formation. The polypeptide is D-alanine--D-alanine ligase B (Clostridium perfringens (strain 13 / Type A)).